Here is a 261-residue protein sequence, read N- to C-terminus: 5'-nucleotidase SurE (261 aa).

Residues aspartate 8, aspartate 9, serine 40, and asparagine 94 each contribute to the a divalent metal cation site.

Belongs to the SurE nucleotidase family. Requires a divalent metal cation as cofactor.

Its subcellular location is the cytoplasm. It carries out the reaction a ribonucleoside 5'-phosphate + H2O = a ribonucleoside + phosphate. In terms of biological role, nucleotidase that shows phosphatase activity on nucleoside 5'-monophosphates. This is 5'-nucleotidase SurE from Anaplasma marginale (strain St. Maries).